The primary structure comprises 61 residues: Small ribosomal subunit protein uS14 (61 aa).

Zn(2+) is bound by residues Cys24, Cys27, Cys40, and Cys43.

It belongs to the universal ribosomal protein uS14 family. Zinc-binding uS14 subfamily. In terms of assembly, part of the 30S ribosomal subunit. Contacts proteins S3 and S10. It depends on Zn(2+) as a cofactor.

Its function is as follows. Binds 16S rRNA, required for the assembly of 30S particles and may also be responsible for determining the conformation of the 16S rRNA at the A site. In Acidothermus cellulolyticus (strain ATCC 43068 / DSM 8971 / 11B), this protein is Small ribosomal subunit protein uS14.